The primary structure comprises 162 residues: Allophycocyanin alpha-B chain (162 aa).

Asparagine 71 bears the N4-methylasparagine mark. Position 81 (cysteine 81) interacts with (2R,3E)-phycocyanobilin.

This sequence belongs to the phycobiliprotein family. Post-translationally, contains one covalently linked phycocyanobilin chromophore.

It localises to the plastid. The protein localises to the cyanelle thylakoid membrane. Allophycocyanin is a photosynthetic bile pigment-protein complex with maximum absorption at approximately 650 nanometers. This Cyanophora paradoxa protein is Allophycocyanin alpha-B chain (apcD).